We begin with the raw amino-acid sequence, 247 residues long: Uridylate kinase (247 aa).

An ATP-binding site is contributed by 17 to 20 (KFSG). Residue Gly-59 participates in UMP binding. Residues Gly-60 and Arg-64 each contribute to the ATP site. Residues Asp-79 and 140–147 (TGNPFFTT) each bind UMP. The ATP site is built by Thr-167, Tyr-173, and Asp-176.

The protein belongs to the UMP kinase family. As to quaternary structure, homohexamer.

Its subcellular location is the cytoplasm. The enzyme catalyses UMP + ATP = UDP + ADP. Its pathway is pyrimidine metabolism; CTP biosynthesis via de novo pathway; UDP from UMP (UMPK route): step 1/1. Its activity is regulated as follows. Inhibited by UTP. Catalyzes the reversible phosphorylation of UMP to UDP. The sequence is that of Uridylate kinase from Legionella pneumophila (strain Lens).